A 145-amino-acid polypeptide reads, in one-letter code: MIALIQRVSRASVVVDNQTIGAIDKGLLVLLGVEREDNREKMEKLATKVMSYRVFSDENGKMNLNLTQAGGSLLVVSQFTLAADTGRGLRPSFSGAGTPEQALGLYEDFVAFCRAQGVTTETGQFGADMKVELINDGPVTFNLQV.

The short motif at 137–138 (GP) is the Gly-cisPro motif, important for rejection of L-amino acids element.

The protein belongs to the DTD family. In terms of assembly, homodimer.

The protein resides in the cytoplasm. It catalyses the reaction glycyl-tRNA(Ala) + H2O = tRNA(Ala) + glycine + H(+). The enzyme catalyses a D-aminoacyl-tRNA + H2O = a tRNA + a D-alpha-amino acid + H(+). Functionally, an aminoacyl-tRNA editing enzyme that deacylates mischarged D-aminoacyl-tRNAs. Also deacylates mischarged glycyl-tRNA(Ala), protecting cells against glycine mischarging by AlaRS. Acts via tRNA-based rather than protein-based catalysis; rejects L-amino acids rather than detecting D-amino acids in the active site. By recycling D-aminoacyl-tRNA to D-amino acids and free tRNA molecules, this enzyme counteracts the toxicity associated with the formation of D-aminoacyl-tRNA entities in vivo and helps enforce protein L-homochirality. This is D-aminoacyl-tRNA deacylase from Shewanella sp. (strain ANA-3).